A 212-amino-acid polypeptide reads, in one-letter code: Pyridoxine/pyridoxamine 5'-phosphate oxidase (212 aa).

Residues 8–11 and Lys66 each bind substrate; that span reads RREY. FMN-binding positions include 61–66, 76–77, Arg82, Lys83, and Gln105; these read RIVLLK and FT. The substrate site is built by Tyr123, Arg127, and Ser131. FMN is bound by residues 140–141 and Trp185; that span reads QS. 191–193 serves as a coordination point for substrate; that stretch reads RLH. Arg195 contacts FMN.

Belongs to the pyridoxamine 5'-phosphate oxidase family. In terms of assembly, homodimer. It depends on FMN as a cofactor.

It carries out the reaction pyridoxamine 5'-phosphate + O2 + H2O = pyridoxal 5'-phosphate + H2O2 + NH4(+). The catalysed reaction is pyridoxine 5'-phosphate + O2 = pyridoxal 5'-phosphate + H2O2. Its pathway is cofactor metabolism; pyridoxal 5'-phosphate salvage; pyridoxal 5'-phosphate from pyridoxamine 5'-phosphate: step 1/1. The protein operates within cofactor metabolism; pyridoxal 5'-phosphate salvage; pyridoxal 5'-phosphate from pyridoxine 5'-phosphate: step 1/1. In terms of biological role, catalyzes the oxidation of either pyridoxine 5'-phosphate (PNP) or pyridoxamine 5'-phosphate (PMP) into pyridoxal 5'-phosphate (PLP). The chain is Pyridoxine/pyridoxamine 5'-phosphate oxidase from Shewanella sp. (strain MR-4).